Consider the following 198-residue polypeptide: Cyclin-dependent kinase inhibitor 1B (198 aa).

Residues 1-11 are compositionally biased toward polar residues; it reads MSNVRVSNGSP. A disordered region spans residues 1-22; the sequence is MSNVRVSNGSPSLERMDARQAE. S10 is subject to Phosphoserine; by UHMK1. The interaction with CDK2 stretch occupies residues 51 to 91; sequence DMEEASQRKWNFDFQNHKPLEGKYEWQEVEKGSLPEFYYRP. Residue Y74 is modified to Phosphotyrosine; by SRC. A disordered region spans residues 87 to 198; that stretch reads FYYRPPRPPK…KKPGLRRRQT (112 aa). Phosphotyrosine; by ABL, LYN and SRC is present on Y88. Phosphotyrosine is present on Y89. A compositionally biased stretch (polar residues) spans 104 to 113; the sequence is QESQDVSGNR. The segment covering 126 to 137 has biased composition (basic and acidic residues); that stretch reads EDTHLVDQKTDT. Positions 153–169 match the Nuclear localization signal motif; the sequence is KRPATDDSSPQNKRANR. Phosphothreonine; by CaMK1, PKB/AKT1 and PIM1 is present on T157. T170 carries the post-translational modification Phosphothreonine. The span at 175 to 186 shows a compositional bias: polar residues; that stretch reads SDGSPNAGSVEQ. Phosphothreonine; by PKB/AKT1, CDK1 and CDK2 is present on T187. Residue T198 is modified to Phosphothreonine; by CaMK1, PKB/AKT1, RPS6KA1, RPS6KA3 and PIM1.

Belongs to the CDI family. In terms of assembly, forms a ternary complex composed of CCNE1, CDK2 and CDKN1B. Interacts directly with CCNE1; the interaction is inhibited by CDK2-dependent phosphorylation on Thr-187. Interacts with COPS5, subunit of the COP9 signalosome complex; the interaction leads to CDKN1B degradation. Interacts with NUP50; the interaction leads to nuclear import and degradation of phosphorylated CDKN1B. Interacts with CCND1 and SNX6. Interacts (Thr-198-phosphorylated form) with 14-3-3 proteins, binds strongly YWHAQ, weakly YWHAE and YWHAH, but not YWHAB nor YWHAZ; the interaction with YWHAQ results in translocation to the cytoplasm. Interacts with AKT1 and LYN; the interactions lead to cytoplasmic mislocation, phosphorylation of CDKN1B and inhibition of cell cycle arrest. Forms a ternary complex with CCNA2 and CDK2; CDKN1B inhibits the kinase activity of CDK2 through conformational rearrangements. Interacts (unphosphorylated form) with CDK2. Forms a complex with CDK2 and SPDYA, but does not directly interact with SPDYA. Forms a ternary complex composed of cyclin D, CDK4 and CDKN1B. Interacts (phosphorylated on Tyr-88 and Tyr-89) with CDK4; the interaction is required for cyclin D and CDK4 complex assembly, induces nuclear translocation and activates the CDK4 kinase activity. Interacts with GRB2. Interacts with PIM1. Identified in a complex with SKP1, SKP2 and CKS1B. Interacts with UHMK1; the interaction leads to cytoplasmic mislocation, phosphorylation of CDKN1B and inhibition of cell cycle arrest. Also interacts with CDK1. Dephosphorylated on Thr-187 by PPM1H, leading to CDKN1B stability. Post-translationally, phosphorylated; phosphorylation occurs on serine, threonine and tyrosine residues. Phosphorylation on Ser-10 is the major site of phosphorylation in resting cells, takes place at the G(0)-G(1) phase and leads to protein stability. Phosphorylation on other sites is greatly enhanced by mitogens, growth factors, cMYC and in certain cancer cell lines. The phosphorylated form found in the cytoplasm is inactivate. Phosphorylation on Thr-198 is required for interaction with 14-3-3 proteins. Phosphorylation on Thr-187, by CDK1 and CDK2 leads to protein ubiquitination and proteasomal degradation. Tyrosine phosphorylation promotes this process. Phosphorylation by PKB/AKT1 can be suppressed by LY294002, an inhibitor of the catalytic subunit of PI3K. Phosphorylation on Tyr-88 and Tyr-89 has no effect on binding CDK2, but is required for binding CDK4. Dephosphorylated on tyrosine residues by G-CSF. Dephosphorylated on Thr-187 by PPM1H, leading to CDKN1B stability. In terms of processing, ubiquitinated; in the cytoplasm by the KPC complex (composed of RNF123/KPC1 and UBAC1/KPC2) and, in the nucleus, by SCF(SKP2). The latter requires prior phosphorylation on Thr-187. Ubiquitinated; by a TRIM21-containing SCF(SKP2)-like complex; leads to its degradation. Subject to degradation in the lysosome. Interaction with SNX6 promotes lysosomal degradation.

It localises to the nucleus. Its subcellular location is the cytoplasm. It is found in the endosome. Functionally, important regulator of cell cycle progression. Inhibits the kinase activity of CDK2 bound to cyclin A, but has little inhibitory activity on CDK2 bound to SPDYA. Involved in G1 arrest. Potent inhibitor of cyclin E- and cyclin A-CDK2 complexes. Forms a complex with cyclin type D-CDK4 complexes and is involved in the assembly, stability, and modulation of CCND1-CDK4 complex activation. Acts either as an inhibitor or an activator of cyclin type D-CDK4 complexes depending on its phosphorylation state and/or stoichometry. The chain is Cyclin-dependent kinase inhibitor 1B (CDKN1B) from Felis catus (Cat).